The primary structure comprises 874 residues: Alanine--tRNA ligase (874 aa).

4 residues coordinate Zn(2+): His-562, His-566, Cys-664, and His-668.

This sequence belongs to the class-II aminoacyl-tRNA synthetase family. Requires Zn(2+) as cofactor.

It localises to the cytoplasm. It catalyses the reaction tRNA(Ala) + L-alanine + ATP = L-alanyl-tRNA(Ala) + AMP + diphosphate. Catalyzes the attachment of alanine to tRNA(Ala) in a two-step reaction: alanine is first activated by ATP to form Ala-AMP and then transferred to the acceptor end of tRNA(Ala). Also edits incorrectly charged Ser-tRNA(Ala) and Gly-tRNA(Ala) via its editing domain. The sequence is that of Alanine--tRNA ligase from Shewanella sp. (strain MR-7).